The following is a 69-amino-acid chain: AKDGYLVSKSTGCKYECFWLGKNEGCDKECKAPNQGGGYGYCHAFACWCENLPESTPTYPIPGKSCGKK.

Residue alanine 1 is a signal peptide. In terms of domain architecture, LCN-type CS-alpha/beta spans 2 to 67; that stretch reads KDGYLVSKST…TYPIPGKSCG (66 aa). Cystine bridges form between cysteine 13/cysteine 66, cysteine 17/cysteine 42, cysteine 26/cysteine 47, and cysteine 30/cysteine 49. Residue cysteine 66 is modified to Cysteine amide. A propeptide spanning residues 67–69 is cleaved from the precursor; the sequence is GKK.

Belongs to the long (4 C-C) scorpion toxin superfamily. Sodium channel inhibitor family. Beta subfamily. In terms of tissue distribution, expressed by the venom gland.

It is found in the secreted. In terms of biological role, beta toxins bind voltage-independently at site-4 of sodium channels (Nav) and shift the voltage of activation toward more negative potentials thereby affecting sodium channel activation and promoting spontaneous and repetitive firing. The polypeptide is Neurotoxin Cex5 (Centruroides exilicauda (Bark scorpion)).